A 903-amino-acid polypeptide reads, in one-letter code: Probable dipeptidyl-aminopeptidase B (903 aa).

The interval 1-83 (MGKFEDDGNS…PLISSGTKTG (83 aa)) is disordered. Residues 1–90 (MGKFEDDGNS…KTGSSSRLRK (90 aa)) are Cytoplasmic-facing. The span at 10–37 (SESVPLTRQRSESLASQTSTDSGLSIAS) shows a compositional bias: polar residues. Residues 91–111 (IVWLLVLLCVGGWVLSFVLFL) traverse the membrane as a helical; Signal-anchor for type II membrane protein segment. The Vacuolar segment spans residues 112-903 (TQKRPDTAAL…TANPKPQEST (792 aa)). Residues 121–143 (LSSASTVEIHEPGPATGGTSHGK) are disordered. Residues Asn-268, Asn-349, and Asn-640 are each glycosylated (N-linked (GlcNAc...) asparagine). The active-site Charge relay system is the Ser-754. Asn-808 carries N-linked (GlcNAc...) asparagine glycosylation. Residues Asp-831 and His-864 each act as charge relay system in the active site.

The protein belongs to the peptidase S9B family.

It is found in the vacuole membrane. It carries out the reaction Release of an N-terminal dipeptide, Xaa-Yaa-|-Zaa-, from a polypeptide, preferentially when Yaa is Pro, provided Zaa is neither Pro nor hydroxyproline.. In terms of biological role, type IV dipeptidyl-peptidase which removes N-terminal dipeptides sequentially from polypeptides having unsubstituted N-termini provided that the penultimate residue is proline. The chain is Probable dipeptidyl-aminopeptidase B (dapB) from Penicillium rubens (strain ATCC 28089 / DSM 1075 / NRRL 1951 / Wisconsin 54-1255) (Penicillium chrysogenum).